The chain runs to 177 residues: Bifunctional protein PyrR (177 aa).

The short motif at 99 to 111 (VILVDDVIYKGRT) is the PRPP-binding element.

Belongs to the purine/pyrimidine phosphoribosyltransferase family. PyrR subfamily.

The catalysed reaction is UMP + diphosphate = 5-phospho-alpha-D-ribose 1-diphosphate + uracil. Its function is as follows. Regulates the transcription of the pyrimidine nucleotide (pyr) operon in response to exogenous pyrimidines. Also displays a weak uracil phosphoribosyltransferase activity which is not physiologically significant. This chain is Bifunctional protein PyrR, found in Microcystis aeruginosa (strain NIES-843 / IAM M-2473).